A 1302-amino-acid polypeptide reads, in one-letter code: Zinc finger protein 536 (1302 aa).

Residues 1–26 (MEEASLCLGVSSTAPEAEPHLSGPVL) are disordered. C2H2-type zinc fingers lie at residues 130 to 152 (YPCP…MRTH), 158 to 180 (FKCP…LRTH), 274 to 297 (FRCT…RILH), 300 to 323 (YKCT…EKAH), 345 to 367 (FRCE…MRKH), 373 to 395 (HCCQ…MKVH), and 631 to 653 (TECP…SRVH). Residues 650–736 (SRVHKRDRKS…IGEEAGRAGG (87 aa)) form a disordered region. Basic and acidic residues predominate over residues 657–676 (RKSDEDALHVGVGLEERRGS). Polar residues predominate over residues 677–698 (GSDQESQSVSRSTTPGSSNVTE). C2H2-type zinc fingers lie at residues 753 to 775 (KDCP…LRIH) and 781 to 803 (YKCP…LERH). Disordered regions lie at residues 804 to 832 (HRER…SKAP), 855 to 897 (GPAS…SKSS), 935 to 988 (KDTK…APTL), and 1133 to 1261 (NKNT…GLEK). Phosphoserine occurs at positions 828 and 829. Over residues 869–883 (GDHSGQATGMPSELS) the composition is skewed to polar residues. Residues 935 to 973 (KDTKDKVPSDAHPMKAHTAEGGEEKASMKPSQRKSEKSQ) are compositionally biased toward basic and acidic residues. 2 stretches are compositionally biased toward acidic residues: residues 1161-1171 (DLSDIASSEDM) and 1179-1188 (NEDEELDTEP). Low complexity predominate over residues 1198–1212 (LSKDGSSEGGDSLLS).

It belongs to the krueppel C2H2-type zinc-finger protein family. Expressed predominantly in the brain, while a weak signal is also detected in the heart and testis. Expression is abundant in neuronal cells of the cerebral cortex, hippocampus and hypothalamic area (at protein level).

It is found in the nucleus. Functionally, transcriptional repressor that negatively regulates neuron differentiation by repressing retinoic acid-induced gene transcription. Binds and interrupts RARA from binding to retinoic acid response elements (RARE) composed of tandem 5'-AGGTCA-3' sites known as DR1-DR5. Recognizes and binds 2 copies of the core DNA sequence 5'-CCCCCA-3'. The polypeptide is Zinc finger protein 536 (Znf536) (Mus musculus (Mouse)).